The following is an 817-amino-acid chain: Leucine--tRNA ligase (817 aa).

Positions 42–52 (PYPSGRLHMGH) match the 'HIGH' region motif. The short motif at 576 to 580 (KMSKS) is the 'KMSKS' region element. Lys579 serves as a coordination point for ATP.

Belongs to the class-I aminoacyl-tRNA synthetase family.

Its subcellular location is the cytoplasm. It catalyses the reaction tRNA(Leu) + L-leucine + ATP = L-leucyl-tRNA(Leu) + AMP + diphosphate. The polypeptide is Leucine--tRNA ligase (Halorhodospira halophila (strain DSM 244 / SL1) (Ectothiorhodospira halophila (strain DSM 244 / SL1))).